An 836-amino-acid polypeptide reads, in one-letter code: Envelope glycoprotein gp160 (836 aa).

Residues 1-21 form the signal peptide; sequence MGMQSGWPFFCLLISLTIGSD. The Extracellular portion of the chain corresponds to 22-656; the sequence is PHWVTVYYGV…ITKWLWYIKI (635 aa). A disulfide bridge links Cys-43 with Cys-63. Residues Asn-77, Asn-121, Asn-130, Asn-134, Asn-146, Asn-150, Asn-180, Asn-189, Asn-224, Asn-228, Asn-233, Asn-254, Asn-276, Asn-282, Asn-288, Asn-318, Asn-328, Asn-340, and Asn-341 are each glycosylated (N-linked (GlcNAc...) asparagine; by host). 5 cysteine pairs are disulfide-bonded: Cys-108/Cys-197, Cys-115/Cys-188, Cys-120/Cys-147, Cys-210/Cys-239, and Cys-220/Cys-231. A V1 region spans residues 120–146; it reads CNNSNGNSAGNSTTNRTEDLEDRQMKN. The interval 147 to 188 is V2; it reads CSFNITTEIRDRKKQVYSLFYVEDVVPIKDGTDNNTYRLINC. The tract at residues 283 to 316 is V3; that stretch reads CTRPGNNTGGQVQIGPAMTFYNIEKIVGDVRQAY. Cys-283 and Cys-317 form a disulfide bridge. The segment at 349–359 is CD4-binding loop; the sequence is KNGGDLEVTHL. 2 cysteine pairs are disulfide-bonded: Cys-363-Cys-418 and Cys-370-Cys-391. A V4 region spans residues 370 to 391; sequence CNTSRLFNESENKTNKTIILPC. N-linked (GlcNAc...) asparagine; by host glycosylation is found at Asn-371, Asn-377, Asn-381, Asn-384, Asn-415, and Asn-435. Positions 434 to 441 are V5; sequence GNKTVYPS. The interval 482-503 is fusion peptide; the sequence is AAFGLGALFLGFLGAAGSTMGA. An immunosuppression region spans residues 545-563; sequence KQLRAKVLAIERYLRDQQI. Cys-569 and Cys-575 form a disulfide bridge. N-linked (GlcNAc...) asparagine; by host glycosylation is found at Asn-582, Asn-588, Asn-597, and Asn-609. The stretch at 605 to 639 forms a coiled coil; sequence RKVRNYSGVIFDLIEQAQEQQNTNEKALLELDQWA. The interval 634–655 is MPER; binding to GalCer; it reads ELDQWASLWNWFDITKWLWYIK. A helical membrane pass occupies residues 657–677; that stretch reads AIMVVAGIIGIRIISAIITII. At 678–836 the chain is on the cytoplasmic side; sequence ARVRQGYSPL…IRQGLERALL (159 aa). Positions 684–687 match the YXXL motif; contains endocytosis signal motif; the sequence is YSPL. A disordered region spans residues 696–715; it reads AARGPDRPEETEEGVGGQDR. The Di-leucine internalization motif signature appears at 835-836; the sequence is LL.

It belongs to the HIV-1 env protein family. As to quaternary structure, the mature envelope protein (Env) consists of a homotrimer of non-covalently associated gp120-gp41 heterodimers. The resulting complex protrudes from the virus surface as a spike. There seems to be as few as 10 spikes on the average virion. Interacts with host CD4, CCR5 and CXCR4. Gp120 also interacts with the C-type lectins CD209/DC-SIGN and CLEC4M/DC-SIGNR (collectively referred to as DC-SIGN(R)). Gp120 and gp41 interact with GalCer. Gp120 interacts with host ITGA4/ITGB7 complex; on CD4+ T-cells, this interaction results in rapid activation of integrin ITGAL/LFA-1, which facilitates efficient cell-to-cell spreading of HIV-1. Gp120 interacts with cell-associated heparan sulfate; this interaction increases virus infectivity on permissive cells and may be involved in infection of CD4- cells. The mature envelope protein (Env) consists of a homotrimer of non-covalently associated gp120-gp41 heterodimers. The resulting complex protrudes from the virus surface as a spike. There seems to be as few as 10 spikes on the average virion. Highly glycosylated by host. The high number of glycan on the protein is reffered to as 'glycan shield' because it contributes to hide protein sequence from adaptive immune system. In terms of processing, palmitoylation of the transmembrane protein and of Env polyprotein (prior to its proteolytic cleavage) is essential for their association with host cell membrane lipid rafts. Palmitoylation is therefore required for envelope trafficking to classical lipid rafts, but not for viral replication. Post-translationally, specific enzymatic cleavages in vivo yield mature proteins. Envelope glycoproteins are synthesized as an inactive precursor that is heavily N-glycosylated and processed likely by host cell furin in the Golgi to yield the mature SU and TM proteins. The cleavage site between SU and TM requires the minimal sequence [KR]-X-[KR]-R. About 2 of the 9 disulfide bonds of gp41 are reduced by P4HB/PDI, following binding to CD4 receptor.

It is found in the virion membrane. Its subcellular location is the host cell membrane. It localises to the host endosome membrane. Its function is as follows. Oligomerizes in the host endoplasmic reticulum into predominantly trimers. In a second time, gp160 transits in the host Golgi, where glycosylation is completed. The precursor is then proteolytically cleaved in the trans-Golgi and thereby activated by cellular furin or furin-like proteases to produce gp120 and gp41. Functionally, attaches the virus to the host lymphoid cell by binding to the primary receptor CD4. This interaction induces a structural rearrangement creating a high affinity binding site for a chemokine coreceptor like CXCR4 and/or CCR5. Acts as a ligand for CD209/DC-SIGN and CLEC4M/DC-SIGNR, which are respectively found on dendritic cells (DCs), and on endothelial cells of liver sinusoids and lymph node sinuses. These interactions allow capture of viral particles at mucosal surfaces by these cells and subsequent transmission to permissive cells. HIV subverts the migration properties of dendritic cells to gain access to CD4+ T-cells in lymph nodes. Virus transmission to permissive T-cells occurs either in trans (without DCs infection, through viral capture and transmission), or in cis (following DCs productive infection, through the usual CD4-gp120 interaction), thereby inducing a robust infection. In trans infection, bound virions remain infectious over days and it is proposed that they are not degraded, but protected in non-lysosomal acidic organelles within the DCs close to the cell membrane thus contributing to the viral infectious potential during DCs' migration from the periphery to the lymphoid tissues. On arrival at lymphoid tissues, intact virions recycle back to DCs' cell surface allowing virus transmission to CD4+ T-cells. In terms of biological role, acts as a class I viral fusion protein. Under the current model, the protein has at least 3 conformational states: pre-fusion native state, pre-hairpin intermediate state, and post-fusion hairpin state. During fusion of viral and target intracellular membranes, the coiled coil regions (heptad repeats) assume a trimer-of-hairpins structure, positioning the fusion peptide in close proximity to the C-terminal region of the ectodomain. The formation of this structure appears to drive apposition and subsequent fusion of viral and target cell membranes. Complete fusion occurs in host cell endosomes and is dynamin-dependent, however some lipid transfer might occur at the plasma membrane. The virus undergoes clathrin-dependent internalization long before endosomal fusion, thus minimizing the surface exposure of conserved viral epitopes during fusion and reducing the efficacy of inhibitors targeting these epitopes. Membranes fusion leads to delivery of the nucleocapsid into the cytoplasm. The polypeptide is Envelope glycoprotein gp160 (Human immunodeficiency virus type 1 group N (isolate YBF106) (HIV-1)).